Reading from the N-terminus, the 693-residue chain is Elongation factor G 1 (693 aa).

The tr-type G domain occupies 4–281 (NKLRNIGISA…AVTRFLPSPH (278 aa)). GTP contacts are provided by residues 13–20 (AHIDSGKT), 80–84 (DTPGH), and 134–137 (NKCD).

Belongs to the TRAFAC class translation factor GTPase superfamily. Classic translation factor GTPase family. EF-G/EF-2 subfamily.

The protein resides in the cytoplasm. Functionally, catalyzes the GTP-dependent ribosomal translocation step during translation elongation. During this step, the ribosome changes from the pre-translocational (PRE) to the post-translocational (POST) state as the newly formed A-site-bound peptidyl-tRNA and P-site-bound deacylated tRNA move to the P and E sites, respectively. Catalyzes the coordinated movement of the two tRNA molecules, the mRNA and conformational changes in the ribosome. The protein is Elongation factor G 1 (fusA) of Borreliella burgdorferi (strain ATCC 35210 / DSM 4680 / CIP 102532 / B31) (Borrelia burgdorferi).